We begin with the raw amino-acid sequence, 130 residues long: Small ribosomal subunit protein bS6 (130 aa).

Residues 100-130 (SPMVKAKDERRERREDFAEAGDDVDAGDSEE) form a disordered region. Residues 104–116 (KAKDERRERREDF) show a composition bias toward basic and acidic residues. Residues 117-130 (AEAGDDVDAGDSEE) show a composition bias toward acidic residues.

Belongs to the bacterial ribosomal protein bS6 family.

Its function is as follows. Binds together with bS18 to 16S ribosomal RNA. This is Small ribosomal subunit protein bS6 from Pectobacterium carotovorum subsp. carotovorum (strain PC1).